The sequence spans 246 residues: MTTHKFEHPLNEKTRIYLRVESLLRQAHLASGFADNHQYQLFFRALFDMVEIFEQIQLKSELAKDLEKQRLSYRHWLNVEGVDQEALNSLLNEIDVVHSQLMGAERFGQALKEDRFLSSIRQRFNLPGGSCCFDLPALHYWLHLPIERKKHDANQWQKSLKPLSDALTLWLKLARETGHFKAQIARAGFFQSDADEANILRLHIPMKYGVYPMISGHKNRFAIKFMAFENGQACSQDVEFELAVCS.

Belongs to the ZapD family. Interacts with FtsZ.

The protein localises to the cytoplasm. Cell division factor that enhances FtsZ-ring assembly. Directly interacts with FtsZ and promotes bundling of FtsZ protofilaments, with a reduction in FtsZ GTPase activity. The sequence is that of Cell division protein ZapD from Vibrio parahaemolyticus serotype O3:K6 (strain RIMD 2210633).